Consider the following 1233-residue polypeptide: Anion exchange protein 3 (1233 aa).

Residues 1 to 11 show a composition bias toward pro residues; sequence MANGVIPPPGG. Disordered regions lie at residues 1 to 320 and 431 to 500; these read MANG…RRPH and DDKD…DGHR. The Cytoplasmic segment spans residues 1–709; the sequence is MANGVIPPPG…DLRDALHSQC (709 aa). The span at 58-73 shows a compositional bias: basic and acidic residues; it reads DPEKPSRSFSERDFAF. 2 stretches are compositionally biased toward basic residues: residues 74–97 and 104–113; these read HRHISHHTHHPLSARLPPPHKLRR and RHTRRKRKKE. Over residues 137 to 153 the composition is skewed to acidic residues; the sequence is GEEEEEEEEEGESETEA. Residues Ser-168, Ser-171, Ser-176, and Ser-199 each carry the phosphoserine modification. The segment covering 201–216 has biased composition (low complexity); it reads QRSVSSSSPRARAPRV. Basic and acidic residues predominate over residues 268–290; that stretch reads DDMKSHRLEDNPGVRRHLVKEPS. Arg-296 bears the Omega-N-methylarginine mark. Residues 437–450 show a composition bias toward low complexity; it reads SFPRNPSSSSVNSV. Residues 482-500 show a composition bias toward basic and acidic residues; it reads HDPDAKERPLHMPGGDGHR. 4 consecutive transmembrane segments (helical) span residues 710–732, 738–775, 795–817, and 827–848; these read VAAVLFIYFAALSPAITFGGLLG, LMGVSELIVSTAVLGVLFSLLGAQPLLVVGFSGPLLVF, VWVGLWLVVFVLALVGAEGTFLV, and IFAFLISLIFIYETFHKLYKVF. The interval 710–1233 is membrane (anion exchange); sequence VAAVLFIYFA…DEYNELHMPV (524 aa). Asn-874 carries N-linked (GlcNAc...) asparagine glycosylation. The chain crosses the membrane as a helical span at residues 894–911; the sequence is ALLSLILMLGTFLIAFFL. The Cytoplasmic portion of the chain corresponds to 912 to 926; sequence RKFRNSRFLGGKARR. Transmembrane regions (helical) follow at residues 927–947, 981–1003, 1029–1050, 1084–1129, and 1156–1192; these read IIGDFGIPISILLMVLVDYSI, PFPPWMMVAAAVPALLVLILIFM, LLLIGSLGGLCGLFGLPWLTAA, VTGV…IQLS, and MHLFTCIQLACIALLWVVKSTAASLAFPFLLLLTVPL. Residue Cys-1166 is the site of S-palmitoyl cysteine attachment.

The protein belongs to the anion exchanger (TC 2.A.31) family.

The protein resides in the cell membrane. It carries out the reaction hydrogencarbonate(in) + chloride(out) = hydrogencarbonate(out) + chloride(in). Functionally, sodium-independent anion exchanger which mediates the electroneutral exchange of chloride for bicarbonate ions across the cell membrane. May be involved in the regulation of intracellular pH, and the modulation of cardiac action potential. The chain is Anion exchange protein 3 (SLC4A3) from Oryctolagus cuniculus (Rabbit).